Consider the following 721-residue polypeptide: Choline O-acetyltransferase (721 aa).

The Proton acceptor role is filled by His-419. Residues 496-508 (GKTF…VSPD), Ser-534, and Gln-656 contribute to the CoA site.

The protein belongs to the carnitine/choline acetyltransferase family. In terms of assembly, the 54 kDa and 13 kDa chains exist as a heterodimer. Post-translationally, the N-terminus of choline O-acetyltransferase 67 kDa and 54 kDa chains are blocked.

The catalysed reaction is choline + acetyl-CoA = acetylcholine + CoA. Its function is as follows. Catalyzes the reversible synthesis of acetylcholine (ACh) from acetyl CoA and choline at cholinergic synapses. This Drosophila melanogaster (Fruit fly) protein is Choline O-acetyltransferase.